The chain runs to 318 residues: Probable pyridoxal 5'-phosphate synthase subunit PDX1.1 (318 aa).

Position 49 (Asp49) interacts with D-ribose 5-phosphate. Lys106 functions as the Schiff-base intermediate with D-ribose 5-phosphate in the catalytic mechanism. Gly178 serves as a coordination point for D-ribose 5-phosphate. Arg190 provides a ligand contact to D-glyceraldehyde 3-phosphate. Residues Gly239 and 260 to 261 (GS) contribute to the D-ribose 5-phosphate site.

Belongs to the PdxS/SNZ family.

It carries out the reaction aldehydo-D-ribose 5-phosphate + D-glyceraldehyde 3-phosphate + L-glutamine = pyridoxal 5'-phosphate + L-glutamate + phosphate + 3 H2O + H(+). It participates in cofactor biosynthesis; pyridoxal 5'-phosphate biosynthesis. Catalyzes the formation of pyridoxal 5'-phosphate from ribose 5-phosphate (RBP), glyceraldehyde 3-phosphate (G3P) and ammonia. The ammonia is provided by PDX2. Can also use ribulose 5-phosphate and dihydroxyacetone phosphate as substrates, resulting from enzyme-catalyzed isomerization of RBP and G3P, respectively. Also plays an indirect role in resistance to singlet oxygen-generating photosensitizers. The chain is Probable pyridoxal 5'-phosphate synthase subunit PDX1.1 (PDX11) from Oryza sativa subsp. japonica (Rice).